Reading from the N-terminus, the 188-residue chain is Large ribosomal subunit protein eL18 (188 aa).

The interval 153-188 (GKAPGTPHSHTKPYVRSKGRKFERARGRRASCGYKN) is disordered. The segment covering 161 to 171 (SHTKPYVRSKG) has biased composition (basic residues).

Belongs to the eukaryotic ribosomal protein eL18 family. Component of the large ribosomal subunit.

It localises to the cytoplasm. Its subcellular location is the cytosol. The protein localises to the rough endoplasmic reticulum. Component of the large ribosomal subunit. The ribosome is a large ribonucleoprotein complex responsible for the synthesis of proteins in the cell. In Oreochromis mossambicus (Mozambique tilapia), this protein is Large ribosomal subunit protein eL18 (rpl18).